We begin with the raw amino-acid sequence, 33 residues long: Dermaseptin-J7 (33 aa).

A Valine amide modification is found at Val-33.

Expressed by the skin glands.

It is found in the secreted. In terms of biological role, has antimicrobial activity. This chain is Dermaseptin-J7, found in Phasmahyla jandaia (Jandaia leaf frog).